The sequence spans 440 residues: Alpha-methylserine aldolase (440 aa).

Lys-255 is modified (N6-(pyridoxal phosphate)lysine).

This sequence belongs to the SHMT family. Alpha-methylserine aldolase subfamily. Homodimer. Pyridoxal 5'-phosphate is required as a cofactor.

It carries out the reaction 2-methyl-L-serine = formaldehyde + L-alanine. The catalysed reaction is 2-ethyl-L-serine = (2S)-2-aminobutanoate + formaldehyde. Its activity is regulated as follows. In the alpha-methyl-L-serine synthesis reaction, activity is inhibited by an excess amount of formaldehyde (at a concentration greater than 4 mM). Formaldehyde release activity is reduced by the sulfhydryl reagent N-ethylmaleimide, iodoacetate amide and iodoacetic acid, but not by dithiothreitol and 2-mercaptoethanol. Activity is enhanced by 1 mM of manganese chloride. Catalyzes the reversible interconversion of alpha-methyl-L-serine to L-alanine and formaldehyde. Can also catalyze the synthesis of alpha-ethyl-L-serine from L-2-aminobutyric acid and formaldehyde. Also shows low alanine racemase activity. Cannot use alpha-methyl-D-serine, L-serine, D-serine, (S)-2-amino-1-propanol, (R)-2-amino-1-propanol, (S)-alpha-hydroxymethyltyrosine, (R)-alpha-hydroxymethyltyrosine, alpha-iso-butyl-DL-serine, alpha-iso-propyl-DL-serine or alpha-benzyl-DL-serine. Cannot use D-alanine instead of L-alanine as the substrate for alpha-methyl-L-serine synthesis. Does not require tetrahydrofolate (THF) for activity. This is Alpha-methylserine aldolase from Variovorax paradoxus.